An 87-amino-acid chain; its full sequence is Acetolactate synthase isozyme 2 small subunit (87 aa).

Residues 5-78 enclose the ACT domain; sequence QVNVSARFNP…DVAHVAICQS (74 aa).

In terms of assembly, tetramer of two large and two small chains. Mg(2+) serves as cofactor. It depends on thiamine diphosphate as a cofactor.

The catalysed reaction is 2 pyruvate + H(+) = (2S)-2-acetolactate + CO2. It functions in the pathway amino-acid biosynthesis; L-isoleucine biosynthesis; L-isoleucine from 2-oxobutanoate: step 1/4. The protein operates within amino-acid biosynthesis; L-valine biosynthesis; L-valine from pyruvate: step 1/4. The polypeptide is Acetolactate synthase isozyme 2 small subunit (ilvM) (Escherichia coli O6:H1 (strain CFT073 / ATCC 700928 / UPEC)).